The following is a 163-amino-acid chain: Shikimate kinase (163 aa).

10-15 (GVGKTT) is a binding site for ATP. Position 14 (Thr-14) interacts with Mg(2+). Residues Asp-28, Arg-52, and Gly-75 each coordinate substrate. Position 116 (Arg-116) interacts with ATP. Arg-134 contributes to the substrate binding site. Arg-151 serves as a coordination point for ATP.

This sequence belongs to the shikimate kinase family. Monomer. Mg(2+) serves as cofactor.

The protein resides in the cytoplasm. The enzyme catalyses shikimate + ATP = 3-phosphoshikimate + ADP + H(+). Its pathway is metabolic intermediate biosynthesis; chorismate biosynthesis; chorismate from D-erythrose 4-phosphate and phosphoenolpyruvate: step 5/7. Functionally, catalyzes the specific phosphorylation of the 3-hydroxyl group of shikimic acid using ATP as a cosubstrate. The sequence is that of Shikimate kinase from Streptococcus pyogenes serotype M4 (strain MGAS10750).